The chain runs to 347 residues: MIPATCTLSQITARLGGEWRGEDISVTAVRPLADAQAEHISFLANPKYKAEVHDSSAGAIIVSAKAADGFEGRNLIVADDPYLYFAKVARLFSPVVKARGGIHPTAVVEPGATVPASCEIGANAYIGANTVLGEGCRILANAVVQHDCKLGDEVVLHPNAVVYYGCTLGRHVEIHSGAVIGADGFGLAFAGDSWFKIPQTGAVTLGDDVEIGSNTNIDRGAMSDTTVGNGTKIDNQVQIGHNCKIGSHTVIAAKTGISGSVTIGSYCIIGGGVGTVGHIEIADKTTIGGGTSVTHSITESGKHLAGIFPMSEHKEWARNAVYIHRLSEMNKRLKTLEQQLSDSKDTQ.

His-241 serves as the catalytic Proton acceptor.

Belongs to the transferase hexapeptide repeat family. LpxD subfamily. As to quaternary structure, homotrimer.

The enzyme catalyses a UDP-3-O-[(3R)-3-hydroxyacyl]-alpha-D-glucosamine + a (3R)-hydroxyacyl-[ACP] = a UDP-2-N,3-O-bis[(3R)-3-hydroxyacyl]-alpha-D-glucosamine + holo-[ACP] + H(+). It participates in bacterial outer membrane biogenesis; LPS lipid A biosynthesis. In terms of biological role, catalyzes the N-acylation of UDP-3-O-acylglucosamine using 3-hydroxyacyl-ACP as the acyl donor. Is involved in the biosynthesis of lipid A, a phosphorylated glycolipid that anchors the lipopolysaccharide to the outer membrane of the cell. In Neisseria gonorrhoeae (strain ATCC 700825 / FA 1090), this protein is UDP-3-O-acylglucosamine N-acyltransferase.